A 128-amino-acid polypeptide reads, in one-letter code: L-ectoine synthase (128 aa).

It belongs to the ectoine synthase family.

It carries out the reaction (2S)-4-acetamido-2-aminobutanoate = L-ectoine + H2O. It functions in the pathway amine and polyamine biosynthesis; ectoine biosynthesis; L-ectoine from L-aspartate 4-semialdehyde: step 3/3. Catalyzes the circularization of gamma-N-acetyl-alpha,gamma-diaminobutyric acid (ADABA) to ectoine (1,4,5,6-tetrahydro-2-methyl-4-pyrimidine carboxylic acid), which is an excellent osmoprotectant. The polypeptide is L-ectoine synthase (Virgibacillus pantothenticus).